The chain runs to 217 residues: MFVTFEGIEGAGKSTAIDYLSDYLQARGHDPVLTREPGGSALGRRLRALLLDVRTGGLASRAELFLFLADRAQHVTEVIRPALEAGQVVLCDRFTDSTLAYQGYGRGLDTEYLRSLNTAATGGLEPDLTLLLDLPVRCGLERAGERNRSAGMVIAEGRFDSESLDFHERVRRGYRALAEEEPERFAIIDASQPPEDVVLQCRSAIEAYLRRRGRGLD.

Residue 7–14 coordinates ATP; sequence GIEGAGKS.

Belongs to the thymidylate kinase family.

The enzyme catalyses dTMP + ATP = dTDP + ADP. In terms of biological role, phosphorylation of dTMP to form dTDP in both de novo and salvage pathways of dTTP synthesis. This chain is Thymidylate kinase, found in Desulfovibrio desulfuricans (strain ATCC 27774 / DSM 6949 / MB).